Reading from the N-terminus, the 350-residue chain is UDP-N-acetylenolpyruvoylglucosamine reductase (350 aa).

In terms of domain architecture, FAD-binding PCMH-type spans 24-195; that stretch reads HVEATARWLL…VAVEFNLPLL (172 aa). Arginine 172 is an active-site residue. Serine 245 functions as the Proton donor in the catalytic mechanism. Residue glutamate 342 is part of the active site.

It belongs to the MurB family. It depends on FAD as a cofactor.

The protein localises to the cytoplasm. It catalyses the reaction UDP-N-acetyl-alpha-D-muramate + NADP(+) = UDP-N-acetyl-3-O-(1-carboxyvinyl)-alpha-D-glucosamine + NADPH + H(+). Its pathway is cell wall biogenesis; peptidoglycan biosynthesis. Functionally, cell wall formation. This is UDP-N-acetylenolpyruvoylglucosamine reductase from Xanthomonas axonopodis pv. citri (strain 306).